Consider the following 589-residue polypeptide: Intermediate filament protein B (589 aa).

The interval 1–84 (SLKQSQESSE…LEATDKEKKE (84 aa)) is head. Residues 81-433 (EKKEMQGLND…KMLEGEESRV (353 aa)) enclose the IF rod domain. Residues 85–116 (MQGLNDRLGNYIDRVKKLEEQNRKLVADLDEL) form a coil 1A region. A linker 1 region spans residues 117 to 130 (RGRWGKDTSEIKIQ). The tract at residues 131 to 268 (YSDSLRDARK…RVHEQEVKEL (138 aa)) is coil 1B. Residues 269 to 285 (QALLAQAPADTREFFKN) are linker 12. Residues 286–433 (ELALAIRDIK…KMLEGEESRV (148 aa)) are coil 2. Positions 434-589 (GLRQMVEQVV…HTQKTIQTGQ (156 aa)) are tail. The tract at residues 446 to 470 (HSLQQQEDTDSTRNVRGEVSTKTTF) is disordered. Residues 466–584 (TKTTFQRSAK…DERATHTQKT (119 aa)) form the LTD domain.

Belongs to the intermediate filament family. In terms of assembly, a and B can form homopolymers. In terms of tissue distribution, giant body muscle cells.

The protein localises to the cytoplasm. The protein is Intermediate filament protein B of Ascaris suum (Pig roundworm).